We begin with the raw amino-acid sequence, 311 residues long: 4-diphosphocytidyl-2-C-methyl-D-erythritol kinase (311 aa).

Lys13 is an active-site residue. An ATP-binding site is contributed by 114–124 (PVAGGMAGGSA). Residue Asp156 is part of the active site.

The protein belongs to the GHMP kinase family. IspE subfamily.

It carries out the reaction 4-CDP-2-C-methyl-D-erythritol + ATP = 4-CDP-2-C-methyl-D-erythritol 2-phosphate + ADP + H(+). The protein operates within isoprenoid biosynthesis; isopentenyl diphosphate biosynthesis via DXP pathway; isopentenyl diphosphate from 1-deoxy-D-xylulose 5-phosphate: step 3/6. Functionally, catalyzes the phosphorylation of the position 2 hydroxy group of 4-diphosphocytidyl-2C-methyl-D-erythritol. This is 4-diphosphocytidyl-2-C-methyl-D-erythritol kinase from Corynebacterium diphtheriae (strain ATCC 700971 / NCTC 13129 / Biotype gravis).